The chain runs to 33 residues: uncharacterized protein (33 aa).

The interval 1-33 (MQPGTGLSFDISQILKQGSDPKQKLPERQAIVL) is disordered.

This is an uncharacterized protein from Caenorhabditis elegans.